Here is a 166-residue protein sequence, read N- to C-terminus: MGRYSVKRYKTKRRTRDLDLIYNDLSTKESVQKLLNQPLDETKPGLGQHYCIHCAKYMETAIALKTHLKGKVHKRRVKELRGVPYTQEVSDAAAGYNLNKFLNRVQEITQSVGPEKESNEALLKEHLDSTLANVKTTEPTLPWAAADAEANTAAVTEAESTASAST.

Positions 7–16 match the Nuclear localization signal motif; the sequence is KRYKTKRRTR. Positions 17-31 are nuclear export signal-like (NES-like); it reads DLDLIYNDLSTKESV. A C2H2-type zinc finger spans residues 49–73; the sequence is HYCIHCAKYMETAIALKTHLKGKVH.

The protein belongs to the ZNF593/BUD20 C2H2-type zinc-finger protein family. As to quaternary structure, associates with pre-60S ribosomal particles; released from the pre-60S particle very early in the cytoplasm.

The protein resides in the nucleus. It is found in the cytoplasm. In terms of biological role, involved in pre-60S ribosomal particles maturation by promoting the nuclear export of the 60S ribosome. Involved in positioning the proximal bud pole signal. The chain is Bud site selection protein 20 from Saccharomyces cerevisiae (strain ATCC 204508 / S288c) (Baker's yeast).